The primary structure comprises 193 residues: Acyl carrier protein phosphodiesterase (193 aa).

It belongs to the AcpH family.

It carries out the reaction holo-[ACP] + H2O = apo-[ACP] + (R)-4'-phosphopantetheine + H(+). Functionally, converts holo-ACP to apo-ACP by hydrolytic cleavage of the phosphopantetheine prosthetic group from ACP. This chain is Acyl carrier protein phosphodiesterase, found in Salmonella newport (strain SL254).